The sequence spans 483 residues: Altronate oxidoreductase (483 aa).

I18 to A29 is a binding site for NAD(+).

It belongs to the mannitol dehydrogenase family. UxaB subfamily.

The enzyme catalyses D-altronate + NAD(+) = keto-D-tagaturonate + NADH + H(+). It functions in the pathway carbohydrate metabolism; pentose and glucuronate interconversion. The sequence is that of Altronate oxidoreductase from Cronobacter sakazakii (strain ATCC BAA-894) (Enterobacter sakazakii).